The primary structure comprises 609 residues: Proteasome-associated ATPase (609 aa).

Positions 1–24 are disordered; it reads MADSERSEAFGTPDDTPLSSNDAA. Residues 19-96 adopt a coiled-coil conformation; the sequence is SSNDAAELEQ…LREEVDRLGQ (78 aa). 296–301 contributes to the ATP binding site; sequence GCGKTL. The segment at 608–609 is docks into pockets in the proteasome alpha-ring; it reads YL.

The protein belongs to the AAA ATPase family. In terms of assembly, homohexamer. Assembles into a hexameric ring structure that caps the 20S proteasome core. Strongly interacts with the prokaryotic ubiquitin-like protein Pup through a hydrophobic interface; the interacting region of ARC lies in its N-terminal coiled-coil domain. There is one Pup binding site per ARC hexamer ring. Upon ATP-binding, the C-terminus of ARC interacts with the alpha-rings of the proteasome core, possibly by binding to the intersubunit pockets.

It functions in the pathway protein degradation; proteasomal Pup-dependent pathway. ATPase which is responsible for recognizing, binding, unfolding and translocation of pupylated proteins into the bacterial 20S proteasome core particle. May be essential for opening the gate of the 20S proteasome via an interaction with its C-terminus, thereby allowing substrate entry and access to the site of proteolysis. Thus, the C-termini of the proteasomal ATPase may function like a 'key in a lock' to induce gate opening and therefore regulate proteolysis. In Mycobacterium ulcerans (strain Agy99), this protein is Proteasome-associated ATPase.